A 203-amino-acid polypeptide reads, in one-letter code: Glycerol-3-phosphate acyltransferase (203 aa).

Transmembrane regions (helical) follow at residues 13–33 (TLAC…LILT), 66–86 (TLLL…LWGV), 88–108 (AGMA…WLSF), 118–138 (IGVL…AWLA), and 156–176 (IIPV…FAVM).

The protein belongs to the PlsY family. In terms of assembly, probably interacts with PlsX.

Its subcellular location is the cell inner membrane. The catalysed reaction is an acyl phosphate + sn-glycerol 3-phosphate = a 1-acyl-sn-glycero-3-phosphate + phosphate. It participates in lipid metabolism; phospholipid metabolism. Catalyzes the transfer of an acyl group from acyl-phosphate (acyl-PO(4)) to glycerol-3-phosphate (G3P) to form lysophosphatidic acid (LPA). This enzyme utilizes acyl-phosphate as fatty acyl donor, but not acyl-CoA or acyl-ACP. In Sinorhizobium medicae (strain WSM419) (Ensifer medicae), this protein is Glycerol-3-phosphate acyltransferase.